A 420-amino-acid chain; its full sequence is MDRASENRRLAAVGKPVPGIGEMGNRRPLRDINNLVGAPPHPSAIAKKPMLEKSGKEEQKPALVVSHRPMTRNFAASLTRKEQLDHQVSVADAAVVCTDPQKNPIPDGTVDDDVESCESNDYIAVDECNDTDEDESMMDIDSADSGNPLAATEYVEELYKFYRENEEMSCVQPDYMSSQGDINEKMRAILIDWLIEVHHKFELMDETLFLTVNIVDRFLEKQVVPRKKLQLVGVTAMLLACKYEEVAVPVVEDLVLISDRAYTKGQILEMEKLILNTLQFNMSVPTPYVFMRRFLKAAQSDKQLQLLSFFILELSLVEYQMLKYRPSLLAAAAVYTAQCALTRCQQWTKTCELHSRYTGEQLLECSRMMVDFHQKAGAGKLTGVHRKYSTFKFGCAAKTEPALFLLESGAGGYNLQKQPC.

Residues Met1–Pro61 form a disordered region. The segment covering Pro49–Lys60 has biased composition (basic and acidic residues).

Belongs to the cyclin family. Cyclin AB subfamily. As to quaternary structure, interacts with CDKB2-1. In terms of tissue distribution, expressed in the root apices.

Its function is as follows. Involved in the control of the cell cycle at the G2/M (mitosis) transition. May activate CDKB2-1 kinase. This chain is Cyclin-B2-1 (CYCB2-1), found in Oryza sativa subsp. japonica (Rice).